A 273-amino-acid chain; its full sequence is NADH-ubiquinone oxidoreductase 29.9 kDa subunit, mitochondrial (273 aa).

Residues 1 to 8 (MRAALRLL) constitute a mitochondrion transit peptide.

It belongs to the complex I NDUFA5 subunit family. Complex I is composed of about 40 different subunits.

Its subcellular location is the mitochondrion inner membrane. Its function is as follows. Accessory subunit of the mitochondrial membrane respiratory chain NADH dehydrogenase (Complex I), that is believed not to be involved in catalysis. Complex I functions in the transfer of electrons from NADH to the respiratory chain. The immediate electron acceptor for the enzyme is believed to be ubiquinone. The polypeptide is NADH-ubiquinone oxidoreductase 29.9 kDa subunit, mitochondrial (nuo-32) (Neurospora crassa (strain ATCC 24698 / 74-OR23-1A / CBS 708.71 / DSM 1257 / FGSC 987)).